The chain runs to 277 residues: Ethanolamine ammonia-lyase small subunit (277 aa).

Adenosylcob(III)alamin contacts are provided by Val164, Glu185, and Cys214.

This sequence belongs to the EutC family. In terms of assembly, the basic unit is a heterodimer which dimerizes to form tetramers. The heterotetramers trimerize; 6 large subunits form a core ring with 6 small subunits projecting outwards. Adenosylcob(III)alamin serves as cofactor.

It is found in the bacterial microcompartment. The catalysed reaction is ethanolamine = acetaldehyde + NH4(+). The protein operates within amine and polyamine degradation; ethanolamine degradation. Catalyzes the deamination of various vicinal amino-alcohols to oxo compounds. Allows this organism to utilize ethanolamine as the sole source of nitrogen and carbon in the presence of external vitamin B12. The polypeptide is Ethanolamine ammonia-lyase small subunit (Pseudomonas fluorescens (strain SBW25)).